Consider the following 160-residue polypeptide: CXXC motif containing zinc binding protein (160 aa).

Residues Cys-33, Cys-36, Cys-67, and Cys-70 each coordinate Zn(2+). Phosphoserine is present on Ser-75.

It belongs to the UPF0587 family. In terms of assembly, monomer.

In Mus musculus (Mouse), this protein is CXXC motif containing zinc binding protein (Czib).